Here is a 648-residue protein sequence, read N- to C-terminus: 1-deoxy-D-xylulose-5-phosphate synthase (648 aa).

Thiamine diphosphate contacts are provided by residues H79 and 120–122; that span reads GHA. D152 contributes to the Mg(2+) binding site. Residues 153–154, N181, F293, and E377 contribute to the thiamine diphosphate site; that span reads GS. N181 serves as a coordination point for Mg(2+).

It belongs to the transketolase family. DXPS subfamily. In terms of assembly, homodimer. Requires Mg(2+) as cofactor. Thiamine diphosphate is required as a cofactor.

It carries out the reaction D-glyceraldehyde 3-phosphate + pyruvate + H(+) = 1-deoxy-D-xylulose 5-phosphate + CO2. It functions in the pathway metabolic intermediate biosynthesis; 1-deoxy-D-xylulose 5-phosphate biosynthesis; 1-deoxy-D-xylulose 5-phosphate from D-glyceraldehyde 3-phosphate and pyruvate: step 1/1. In terms of biological role, catalyzes the acyloin condensation reaction between C atoms 2 and 3 of pyruvate and glyceraldehyde 3-phosphate to yield 1-deoxy-D-xylulose-5-phosphate (DXP). The sequence is that of 1-deoxy-D-xylulose-5-phosphate synthase from Bacteroides fragilis (strain ATCC 25285 / DSM 2151 / CCUG 4856 / JCM 11019 / LMG 10263 / NCTC 9343 / Onslow / VPI 2553 / EN-2).